A 602-amino-acid polypeptide reads, in one-letter code: Isocitrate dehydrogenase kinase/phosphatase (602 aa).

ATP-binding positions include Ala325–Met331 and Lys346. Asp381 is a catalytic residue.

Belongs to the AceK family.

Its subcellular location is the cytoplasm. The enzyme catalyses L-seryl-[isocitrate dehydrogenase] + ATP = O-phospho-L-seryl-[isocitrate dehydrogenase] + ADP + H(+). Its function is as follows. Bifunctional enzyme which can phosphorylate or dephosphorylate isocitrate dehydrogenase (IDH) on a specific serine residue. This is a regulatory mechanism which enables bacteria to bypass the Krebs cycle via the glyoxylate shunt in response to the source of carbon. When bacteria are grown on glucose, IDH is fully active and unphosphorylated, but when grown on acetate or ethanol, the activity of IDH declines drastically concomitant with its phosphorylation. This chain is Isocitrate dehydrogenase kinase/phosphatase, found in Paracidovorax citrulli (strain AAC00-1) (Acidovorax citrulli).